We begin with the raw amino-acid sequence, 299 residues long: Tyrosine recombinase XerC (299 aa).

The Core-binding (CB) domain maps to 1–85 (MERQLDAYCE…AVRGLYHYLN (85 aa)). In terms of domain architecture, Tyr recombinase spans 106–285 (RLPKTLDTDR…DFQHLATVYD (180 aa)). Residues Arg-146, Lys-170, His-237, Arg-240, and His-263 contribute to the active site. The O-(3'-phospho-DNA)-tyrosine intermediate role is filled by Tyr-272.

This sequence belongs to the 'phage' integrase family. XerC subfamily. As to quaternary structure, forms a cyclic heterotetrameric complex composed of two molecules of XerC and two molecules of XerD.

Its subcellular location is the cytoplasm. In terms of biological role, site-specific tyrosine recombinase, which acts by catalyzing the cutting and rejoining of the recombining DNA molecules. The XerC-XerD complex is essential to convert dimers of the bacterial chromosome into monomers to permit their segregation at cell division. It also contributes to the segregational stability of plasmids. This Pseudomonas fluorescens protein is Tyrosine recombinase XerC.